The chain runs to 258 residues: Mediator of RNA polymerase II transcription subunit 18 (258 aa).

The protein belongs to the Mediator complex subunit 18 family. In terms of assembly, component of the Mediator complex.

It localises to the nucleus. Functionally, component of the Mediator complex, a coactivator involved in the regulated transcription of nearly all RNA polymerase II-dependent genes. Mediator functions as a bridge to convey information from gene-specific regulatory proteins to the basal RNA polymerase II transcription machinery. Mediator is recruited to promoters by direct interactions with regulatory proteins and serves as a scaffold for the assembly of a functional preinitiation complex with RNA polymerase II and the general transcription factors. This Eremothecium gossypii (strain ATCC 10895 / CBS 109.51 / FGSC 9923 / NRRL Y-1056) (Yeast) protein is Mediator of RNA polymerase II transcription subunit 18 (SRB5).